The primary structure comprises 398 residues: Aspartate aminotransferase (398 aa).

L-aspartate-binding residues include glycine 36, tryptophan 132, and asparagine 185. Lysine 248 is modified (N6-(pyridoxal phosphate)lysine). Position 376 (arginine 376) interacts with L-aspartate.

This sequence belongs to the class-I pyridoxal-phosphate-dependent aminotransferase family. In terms of assembly, homodimer. It depends on pyridoxal 5'-phosphate as a cofactor.

The protein resides in the cytoplasm. The catalysed reaction is L-aspartate + 2-oxoglutarate = oxaloacetate + L-glutamate. This Pseudomonas aeruginosa (strain ATCC 15692 / DSM 22644 / CIP 104116 / JCM 14847 / LMG 12228 / 1C / PRS 101 / PAO1) protein is Aspartate aminotransferase (aspC).